A 388-amino-acid chain; its full sequence is Tetratricopeptide repeat protein 4 (388 aa).

An N-acetylmethionine modification is found at Met1. Ser51 bears the Phosphoserine mark. TPR repeat units lie at residues 79–112 (ARTYKDEGNDYFKEKDYKKAVISYTEGLKKKCAD), 117–150 (AVLYTNRAAAQYYLGNFRSSLNDVTAARKLKPCH), and 151–184 (LKAIIRGASCHLELKNYVEAVNWCDEGLQIDATE). Residue Ser244 is modified to Phosphoserine.

The protein belongs to the TTC4 family. As to quaternary structure, interacts (via TPR repeats) with HSP90AB1. Interacts with HSPA8, CDC6, TBK1 and MSL1.

The protein localises to the nucleus. Its subcellular location is the nucleoplasm. It is found in the cytoplasm. Its function is as follows. May act as a co-chaperone for HSP90AB1. The sequence is that of Tetratricopeptide repeat protein 4 (TTC4) from Bos taurus (Bovine).